The primary structure comprises 239 residues: Xyloglucan-specific endo-beta-1,4-glucanase A (239 aa).

The N-terminal stretch at 1–14 (MKLLALSLASLASA) is a signal peptide. Residue Asn-172 is glycosylated (N-linked (GlcNAc...) asparagine).

Belongs to the glycosyl hydrolase 12 (cellulase H) family.

The protein resides in the secreted. It carries out the reaction xyloglucan + H2O = xyloglucan oligosaccharides.. Its function is as follows. Catalyzes endohydrolysis of 1,4-beta-D-glucosidic linkages in xyloglucan with retention of the beta-configuration of the glycosyl residues. Specific for xyloglucan and does not hydrolyze other cell wall components. Active against tamarind xyloglucan. In Emericella nidulans (strain FGSC A4 / ATCC 38163 / CBS 112.46 / NRRL 194 / M139) (Aspergillus nidulans), this protein is Xyloglucan-specific endo-beta-1,4-glucanase A (xgeA).